The chain runs to 374 residues: uncharacterized protein (374 aa).

The segment at 197–223 is disordered; that stretch reads GTTTTTNNNNNNNNNNNNNNNNGTNIT. Residues 198 to 223 show a composition bias toward low complexity; it reads TTTTTNNNNNNNNNNNNNNNNGTNIT. Residues 302 to 342 are a coiled coil; the sequence is DEVSDCNDINTNLKKKRKQQEQLQIEKEKKLLTIQQEQTKI.

This is an uncharacterized protein from Dictyostelium discoideum (Social amoeba).